The chain runs to 309 residues: MVCQHNDELEALVKKAKKVTDKGEVASYIPALAKADKHDLSVAIYYSNNVCLSAGDVEKTFTLQSISKVLSLALVLMEYGKDKVFSYVGQEPTGDPFNSIIKLETVNPSKPLNPMINAGALVVTSLIRGRTVKERLDYLLSFIRRLTNNQEITYCREVAESEYSTSMINRAMCYYMKQYGIFEDDVEAVMDLYTKQCAIEMNSLDLAKIGSVFALNGRHPETGEQVISKDVARICKTFMVTCGMYNASGEFAIKVGIPAKSGVSGGIMGISPYDFGIGIFGPALDEKGNSIAGVKLLEIMSEMYRLSIF.

Ser65, Asn117, Glu162, Asn169, Tyr193, Tyr245, and Val263 together coordinate substrate.

Belongs to the glutaminase family. As to quaternary structure, homotetramer.

It carries out the reaction L-glutamine + H2O = L-glutamate + NH4(+). The protein is Glutaminase 2 of Bacillus subtilis (strain 168).